The following is a 627-amino-acid chain: CTP synthase (627 aa).

Residues 300–554 form the Glutamine amidotransferase type-1 domain; that stretch reads CIAVVGKYTK…LASVDRLNQY (255 aa). Active-site for GATase activity residues include cysteine 399, histidine 526, and glutamate 528. A phosphoserine mark is found at serine 567, serine 570, serine 571, and serine 588. Position 595 is a phosphothreonine (threonine 595). Polar residues predominate over residues 599–613; that stretch reads GISKSCNGSISTSDS. The tract at residues 599–627 is disordered; sequence GISKSCNGSISTSDSEGACGGVDPTNGHK.

It belongs to the CTP synthase family. In ovary, expressed in oocytes, follicle cells and nurse cells. Also expressed in larval and adult testis (at protein level). In larvae, expressed in lymph gland, salivary gland, regions of the midgut, testis, optical lobe and trachea. Isoform 1 is expressed in adult testis, ovary, accessory gland and head. Isoform 2 is weakly expressed in ovary.

The protein localises to the cytoplasm. It catalyses the reaction UTP + L-glutamine + ATP + H2O = CTP + L-glutamate + ADP + phosphate + 2 H(+). It participates in pyrimidine metabolism; CTP biosynthesis via de novo pathway; CTP from UDP: step 2/2. In terms of biological role, catalyzes the ATP-dependent amination of UTP to CTP with either L-glutamine or ammonia as the source of nitrogen. Constitutes the rate-limiting enzyme in the synthesis of cytosine nucleotides. Functionally, required for assembly of cytoophidium in female germline cells. In nurse cells, CTPsyn filament assembly in the cytoophidium is regulated by Ack kinase which may thereby contribute to the control of CTP production at specific stages of oogenesis and development of the nurse cell membrane. The chain is CTP synthase from Drosophila melanogaster (Fruit fly).